A 115-amino-acid chain; its full sequence is Parathyroid hormone (115 aa).

An N-terminal signal peptide occupies residues 1-25 (MMSAKDMVKVMIVMLAICFLARSDG). The propeptide occupies 26–31 (KSVKKR). Residues 51–69 (RVEWLRKKLQDVHNFVALG) are important for receptor binding. The disordered stretch occupies residues 77-99 (GSSQRPRKKEDNVLVESHQKSLG). The span at 84 to 99 (KKEDNVLVESHQKSLG) shows a compositional bias: basic and acidic residues.

It belongs to the parathyroid hormone family. In terms of assembly, interacts with PTH1R (via N-terminal extracellular domain).

Its subcellular location is the secreted. Its function is as follows. Parathyroid hormone elevates calcium level by dissolving the salts in bone and preventing their renal excretion. Acts by binding to its receptor, PTH1R, activating G protein-coupled receptor signaling. Stimulates [1-14C]-2-deoxy-D-glucose (2DG) transport and glycogen synthesis in osteoblastic cells. The polypeptide is Parathyroid hormone (Bos taurus (Bovine)).